A 272-amino-acid polypeptide reads, in one-letter code: Tryptophan synthase alpha chain (272 aa).

Active-site proton acceptor residues include E53 and D64.

The protein belongs to the TrpA family. Tetramer of two alpha and two beta chains.

The catalysed reaction is (1S,2R)-1-C-(indol-3-yl)glycerol 3-phosphate + L-serine = D-glyceraldehyde 3-phosphate + L-tryptophan + H2O. It participates in amino-acid biosynthesis; L-tryptophan biosynthesis; L-tryptophan from chorismate: step 5/5. Functionally, the alpha subunit is responsible for the aldol cleavage of indoleglycerol phosphate to indole and glyceraldehyde 3-phosphate. This is Tryptophan synthase alpha chain from Xanthomonas campestris pv. campestris (strain 8004).